The primary structure comprises 333 residues: NADH-quinone oxidoreductase subunit H (333 aa).

8 helical membrane-spanning segments follow: residues 15-35 (FFIFFGLAVLLLFAVLGFVTY), 88-108 (FILAPVIAFAPAFMVLAVIPF), 117-137 (IGVGLLYYIAVSGITTIGVVT), 159-179 (ISYEIPLVMSVIGVVLLAGSL), 191-211 (VWYIFAQPIGFVIFLIAAVAE), 239-259 (WAFFMLSEYVYFFGMSSLITV), 272-294 (GFIPGAVWFALKFSSVVFLLIWF), and 313-333 (ILLPIALANIFLTALIKELFF).

The protein belongs to the complex I subunit 1 family. In terms of assembly, NDH-1 is composed of 14 different subunits. Subunits NuoA, H, J, K, L, M, N constitute the membrane sector of the complex.

It is found in the cell membrane. The enzyme catalyses a quinone + NADH + 5 H(+)(in) = a quinol + NAD(+) + 4 H(+)(out). NDH-1 shuttles electrons from NADH, via FMN and iron-sulfur (Fe-S) centers, to quinones in the respiratory chain. The immediate electron acceptor for the enzyme in this species is believed to be ubiquinone. Couples the redox reaction to proton translocation (for every two electrons transferred, four hydrogen ions are translocated across the cytoplasmic membrane), and thus conserves the redox energy in a proton gradient. This subunit may bind ubiquinone. The chain is NADH-quinone oxidoreductase subunit H from Bacillus mycoides (strain KBAB4) (Bacillus weihenstephanensis).